Here is a 629-residue protein sequence, read N- to C-terminus: Phosphoglucomutase, chloroplastic (629 aa).

The transit peptide at 1-69 (MSSTYARFDT…SSSSGPIIAG (69 aa)) directs the protein to the chloroplast. Residues arginine 94 and serine 187 each contribute to the alpha-D-glucose 1,6-bisphosphate site. Serine 187 (phosphoserine intermediate) is an active-site residue. Residues serine 187, aspartate 352, aspartate 354, and aspartate 356 each contribute to the Mg(2+) site. The residue at position 187 (serine 187) is a Phosphoserine. Alpha-D-glucose 1,6-bisphosphate contacts are provided by aspartate 356, arginine 357, threonine 420, glutamate 439, serine 441, and lysine 452.

The protein belongs to the phosphohexose mutase family. In terms of assembly, monomer. Mg(2+) is required as a cofactor.

It localises to the plastid. It is found in the chloroplast. The enzyme catalyses alpha-D-glucose 1-phosphate = alpha-D-glucose 6-phosphate. It carries out the reaction O-phospho-L-seryl-[protein] + alpha-D-glucose 1-phosphate = alpha-D-glucose 1,6-bisphosphate + L-seryl-[protein]. The catalysed reaction is alpha-D-glucose 1,6-bisphosphate + L-seryl-[protein] = O-phospho-L-seryl-[protein] + alpha-D-glucose 6-phosphate. With respect to regulation, inhibited by the Calvin cycle intermediates fructose-1,6-bisphosphate and ribulose-1,5-bisphosphate. Its function is as follows. Catalyzes the reversible isomerization of alpha-D-glucose 1-phosphate to alpha-D-glucose 6-phosphate. The mechanism proceeds via the intermediate compound alpha-D-glucose 1,6-bisphosphate. This enzyme participates in both the breakdown and synthesis of glucose. The polypeptide is Phosphoglucomutase, chloroplastic (PGMP) (Brassica napus (Rape)).